The chain runs to 118 residues: Histone H4 (118 aa).

The disordered stretch occupies residues 1-39 (MATDTGSGRGKGGKGVTLGKGSKGAKASKGGKRIRTKTQ). The segment covering 7–22 (SGRGKGGKGVTLGKGS) has biased composition (gly residues).

Belongs to the histone H4 family. The nucleosome is a histone octamer containing two molecules each of H2A, H2B, H3 and H4 assembled in one H3-H4 heterotetramer and two H2A-H2B heterodimers. The octamer wraps approximately 147 bp of DNA.

The protein resides in the nucleus. The protein localises to the chromosome. Core component of nucleosome. Nucleosomes wrap and compact DNA into chromatin, limiting DNA accessibility to the cellular machineries which require DNA as a template. Histones thereby play a central role in transcription regulation, DNA repair, DNA replication and chromosomal stability. DNA accessibility is regulated via a complex set of post-translational modifications of histones, also called histone code, and nucleosome remodeling. The sequence is that of Histone H4 from Entamoeba histolytica (strain ATCC 30459 / HM-1:IMSS / ABRM).